The primary structure comprises 196 residues: GTP cyclohydrolase-2 (196 aa).

A GTP-binding site is contributed by 49–53; that stretch reads RVHSE. Residues cysteine 54, cysteine 65, and cysteine 67 each contribute to the Zn(2+) site. GTP-binding positions include glutamine 70, 92 to 94, and threonine 114; that span reads EGR. The active-site Proton acceptor is aspartate 126. The Nucleophile role is filled by arginine 128. Threonine 149 and lysine 154 together coordinate GTP.

This sequence belongs to the GTP cyclohydrolase II family. As to quaternary structure, homodimer. Zn(2+) serves as cofactor.

It catalyses the reaction GTP + 4 H2O = 2,5-diamino-6-hydroxy-4-(5-phosphoribosylamino)-pyrimidine + formate + 2 phosphate + 3 H(+). Its pathway is cofactor biosynthesis; riboflavin biosynthesis; 5-amino-6-(D-ribitylamino)uracil from GTP: step 1/4. Its function is as follows. Catalyzes the conversion of GTP to 2,5-diamino-6-ribosylamino-4(3H)-pyrimidinone 5'-phosphate (DARP), formate and pyrophosphate. This is GTP cyclohydrolase-2 from Escherichia coli O127:H6 (strain E2348/69 / EPEC).